Reading from the N-terminus, the 297-residue chain is ER membrane protein complex subunit 2 (297 aa).

A2 is subject to N-acetylalanine. 3 TPR repeats span residues 87–120 (HRVK…DPTN), 155–188 (QEAW…NPHN), and 192–225 (CQQY…NNRN). Position 255 is an N6-acetyllysine (K255).

Belongs to the EMC2 family. Component of the ER membrane protein complex (EMC). Interacts with WNK1 (via amphipathic alpha-helix region); promoting the ER membrane protein complex assembly by preventing EMC2 ubiquitination. Ubiquitinated when soluble in the cytoplasm, leading to its degradation by the proteasome. Interaction with EMC2 prevents its ubiquitination and degradation.

Its subcellular location is the endoplasmic reticulum membrane. In terms of biological role, part of the endoplasmic reticulum membrane protein complex (EMC) that enables the energy-independent insertion into endoplasmic reticulum membranes of newly synthesized membrane proteins. Preferentially accommodates proteins with transmembrane domains that are weakly hydrophobic or contain destabilizing features such as charged and aromatic residues. Involved in the cotranslational insertion of multi-pass membrane proteins in which stop-transfer membrane-anchor sequences become ER membrane spanning helices. It is also required for the post-translational insertion of tail-anchored/TA proteins in endoplasmic reticulum membranes. By mediating the proper cotranslational insertion of N-terminal transmembrane domains in an N-exo topology, with translocated N-terminus in the lumen of the ER, controls the topology of multi-pass membrane proteins like the G protein-coupled receptors. By regulating the insertion of various proteins in membranes, it is indirectly involved in many cellular processes. This chain is ER membrane protein complex subunit 2, found in Pongo abelii (Sumatran orangutan).